We begin with the raw amino-acid sequence, 992 residues long: MKGLSGSRSHHHGITCESACDSLSHHSDHKPYLLSPVDHHPADHPYYTQRNSFQAECVGPFSDPLASSTFPRRHYTSQQELKDESALVPRTLATKANRLPTNLLDQFERQLPLSRDGYHTLQYKRTAVEHRSDSPGRIRHLVHSVQKLFTKSHSLEGASKGGVNGGKASPDGSQTVRYGKRSKSKERRSEPKARSNASNASPTSPSWWSSDDNLDGDMCLYHTPSGVMTMGRCPDRSVSQYFMGAYNTISEQAVKASRSNNDVKCSTCANLPVTLDAPLLKKSAWSSTLTVSRAREVYQKASVNMDQAVVKSEACQQERSCQYLQVPQDEWTGYTPRGKDDEIPCRRMRSGSYIKAMGDEDSGDSDTSPKPSPKVAARRESYLKATQPSLTELTTLKISNEHSPKLQIRSHSYLRAVSEVSINRSLDSLDPAGLLTSPKFRSRNESYMRAMSTISQVSEMEVNGQFESVCESVFSELESQAVEALDLPMPGCFRMRSHSYVRAIEKGCSQDDECVSLRSSSPPRTTTTVRTIQSSTGVIKLSSAVEVSSCITTYKKTPPPVPPRTTTKPFISITAQSSTESAQDAYMDGQGQRGDMISQSGLSNSTESLDSMKALTAAIEAANAQIHGPASQHMGSNAAAVTTTTTIATVTTEDRKKDFKKNRCLSIGIQVDDAEESEKMAESKTSSKFQSVGVQVEEEKCFRRFTRSNSVTTAVQADLDFHDNLENSLESIEDNSCPGPMARQFSRDASTSTVSIQGSGNHYHACAADDDFDTDFDPSILPPPDPWIDSITEDPLEAVQRSVCHRDGHWFLKLLQAERDRMEGWCKQMEREERENNLPEDILGKIRTAVGSAQLLMAQKFYQFRELCEENLNPNAHPRPTSQDLAGFWDMLQLSIENISMKFDELHQLKANNWKQMDPLDKKERRAPPPVPKKPAKGPAPLIRERSLESSQRQEARKRLMAAKRAASVRQNSATESAESIEIYIPEAQTRL.

2 disordered regions span residues serine 154–serine 209 and lysine 355–valine 375. Serine 169 carries the phosphoserine modification. Over residues serine 195 to serine 209 the composition is skewed to low complexity. A phosphoserine mark is found at serine 362, serine 365, serine 368, serine 372, serine 389, serine 418, serine 421, serine 425, serine 428, serine 437, serine 509, serine 516, and serine 578. Residue threonine 579 is modified to Phosphothreonine. 2 positions are modified to phosphoserine: serine 581 and serine 605. A Phosphothreonine modification is found at threonine 606. Phosphoserine occurs at positions 608 and 611. 2 interaction with DYL2 regions span residues leucine 665–glutamate 676 and serine 687–glutamate 698. The tract at residues tryptophan 914–serine 980 is disordered. Composition is skewed to basic and acidic residues over residues aspartate 918 to alanine 927 and isoleucine 943 to lysine 958. Residue serine 947 is modified to Phosphoserine. Positions valine 969–alanine 978 are enriched in polar residues. A PDZ-binding motif is present at residues threonine 990–leucine 992.

The protein belongs to the SAPAP family. As to quaternary structure, interacts with guanylate kinase-like domain of DLG1, DLG2, DLG3, DLG4 and AIP1. Interacts with the PDZ domain of SHANK1, SHANK2 and SHANK3. Found in a complex with DLG4 and SHANK1, SHANK2 or SHANK3. Found in a complex with DLG4 and BEGAIN. Interacts with DYL2 and LRFN1. Interacts with MPP2 (via the SH3-Guanylate kinase-like sub-module). In terms of processing, ubiquitinated by TRIM3; leading to proteasomal degradation. As to expression, expressed in brain and testis.

The protein localises to the cell membrane. Its subcellular location is the postsynaptic density. It localises to the synapse. Part of the postsynaptic scaffold in neuronal cells. This Rattus norvegicus (Rat) protein is Disks large-associated protein 1.